We begin with the raw amino-acid sequence, 664 residues long: E3 ubiquitin-protein ligase CHFR (664 aa).

Residues 1-21 (MERPEEGKQSPPPQPWGRLLR) are disordered. The FHA domain maps to 38-89 (WTIGRRRGCDLSFPSNKLVSGDHCRIVVDEKSGQVTLEDTSTSGTVINKLKV). Residues 142-267 (FHGTKDTSGA…KKMRGDGDLD (126 aa)) form a disordered region. The segment covering 186-198 (PTASASSTEPSPA) has biased composition (low complexity). Serine 244 carries the phosphoserine modification. The segment covering 254–264 (EPVKKKMRGDG) has biased composition (basic and acidic residues). An RING-type zinc finger spans residues 304–343 (CIICQDLLHDCVSLQPCMHTFCAACYSGWMERSSLCPTCR). Position 386 is a phosphothreonine (threonine 386). 2 disordered regions span residues 388–417 (DMLQ…VDSE) and 439–461 (AQPP…GDAP). Positions 400-417 (DEEGSSEDLLELSDVDSE) are enriched in acidic residues. Residues 633–655 (PDCYWGRNCRTQVKAHHAMKFNH) form a PBZ-type zinc finger.

This sequence belongs to the CHFR family. In terms of assembly, interacts with HDAC1 and HDAC2. Interacts with PML (with sumoylated form of PML). Poly-ADP-ribosylated. In addition to binding non covalently poly(ADP-ribose) via its PBZ-type zinc finger, the protein is also covalently poly-ADP-ribosylated by PARP1. Post-translationally, autoubiquitinated; may regulate its cellular level. In terms of processing, phosphorylated by PKB. Phosphorylation may affect its E3 ligase activity. Ubiquitous.

It is found in the nucleus. Its subcellular location is the PML body. The enzyme catalyses S-ubiquitinyl-[E2 ubiquitin-conjugating enzyme]-L-cysteine + [acceptor protein]-L-lysine = [E2 ubiquitin-conjugating enzyme]-L-cysteine + N(6)-ubiquitinyl-[acceptor protein]-L-lysine.. It participates in protein modification; protein ubiquitination. Functionally, E3 ubiquitin-protein ligase that functions in the antephase checkpoint by actively delaying passage into mitosis in response to microtubule poisons. Acts in early prophase before chromosome condensation, when the centrosome move apart from each other along the periphery of the nucleus. Probably involved in signaling the presence of mitotic stress caused by microtubule poisons by mediating the 'Lys-48'-linked ubiquitination of target proteins, leading to their degradation by the proteasome. Promotes the ubiquitination and subsequent degradation of AURKA and PLK1. Probably acts as a tumor suppressor, possibly by mediating the polyubiquitination of HDAC1, leading to its degradation. May also promote the formation of 'Lys-63'-linked polyubiquitin chains and functions with the specific ubiquitin-conjugating UBC13-MMS2 (UBE2N-UBE2V2) heterodimer. Substrates that are polyubiquitinated at 'Lys-63' are usually not targeted for degradation, but are rather involved in signaling cellular stress. In Homo sapiens (Human), this protein is E3 ubiquitin-protein ligase CHFR (CHFR).